A 475-amino-acid chain; its full sequence is MDKRSFKVIVVGGSIAGLTLAHSLDLAGIDYIVLEKHSDPLATVGGSVGLLPNGWRILHQLGLRHQLEQEACPVKVAHMTYPDGFVFSDNFPAAIQERQVPEIQFPIGYMPANDERFGYSLSVLTRQQLIEVLYLGLRDKSKIKVGQRVIKIQHHQNRRGVSVFTESGQEHVGDLVAGADGVHSITRSQMWLQLGQKLDAEKERRQLVAEYSCVFGISSPLKGIPPGEQLIACHDNATVLAFPGKDAHIGWGLIQKLNRPCNSPATTQSSDGETALIMAKSAAGLGLCKDLKFHDLWVNTPKYSFTILEEGLFQIWHHGRIMTPNMAQGANTAIEGAAALANTLRRISQIDKPSEDDINRLLQGYTVRQQKRLRAVHAISRSVTRVHARQGRIKKIIGRYVYPYTPGAALHTFSRIIAPAPCLDYVPMPFPGPGWTRALVSGWSPISGVLLLVIPIIALVYGYSVINFGRDSINN.

Residues 1-23 form the signal peptide; sequence MDKRSFKVIVVGGSIAGLTLAHS. Residues glutamate 35, glycine 49, and arginine 126 each coordinate FAD. Asparagine 236 carries an N-linked (GlcNAc...) asparagine glycan. Position 330 (alanine 330) interacts with FAD. Residues 446 to 466 traverse the membrane as a helical segment; that stretch reads ISGVLLLVIPIIALVYGYSVI.

It belongs to the paxM FAD-dependent monooxygenase family. It depends on FAD as a cofactor.

The protein resides in the membrane. It functions in the pathway secondary metabolite biosynthesis. Functionally, FAD-dependent monooxygenase; part of the gene cluster that mediates the biosynthesis of the polyenes aspernidgulenes. The carbon backbone of aspernidgulenes is synthesized by the HR-PKS sdgA, which accepts acetyl-CoA as the starter unit and performs malonyl-CoA extensions as well as regioselective methylation and reduction. The resulting nonaketide offloads the HR-PKS by intramolecular lactonization to yield the 5,6-dihydro-alpha-pyrone-containing hexaenoic acids preaspernidgulene A1 and A2. The FAD-dependent monooxygenase sdgC then installs the first epoxide on the penultimate double bond. Subsequently, the FAD-dependent monooxygenase sdgF presumably generates a ketone intermediate through Meinwald rearrangement involving a hydride shift. Next, sdgC introduces another epoxide on the last olefin of the ketone intermediate after E/Z isomerization. The epoxide hydrolase sdgD then catalyzes stereospecific cyclization of the 5,6-dihydro-alpha-pyrone and opening of the epoxide ring to form an oxygenated trimethylcyclopentanone and an oxabicyclo[2.2.1]heptane unit. Finally, the bicyclic unit undergoes hydrolytic cleavage, either spontaneously or catalyzed by sdgD, to assemble the dimethyl-gamma-lactone moiety in aspernidgulene A1. The chain is FAD-dependent monooxygenase sdgC from Emericella nidulans (strain FGSC A4 / ATCC 38163 / CBS 112.46 / NRRL 194 / M139) (Aspergillus nidulans).